A 147-amino-acid chain; its full sequence is Ubiquitin-conjugating enzyme E2 2 (147 aa).

A UBC core domain is found at 1-147 (MALKRIQKEL…AREWTQKYAM (147 aa)). The active-site Glycyl thioester intermediate is Cys85.

It belongs to the ubiquitin-conjugating enzyme family. Interacts with the brc-1-brd-1 heterodimer following ionizing irradiation. Expressed in the nervous system.

It localises to the nucleus. Its subcellular location is the chromosome. The protein localises to the cytoplasm. It carries out the reaction S-ubiquitinyl-[E1 ubiquitin-activating enzyme]-L-cysteine + [E2 ubiquitin-conjugating enzyme]-L-cysteine = [E1 ubiquitin-activating enzyme]-L-cysteine + S-ubiquitinyl-[E2 ubiquitin-conjugating enzyme]-L-cysteine.. It participates in protein modification; protein ubiquitination. In terms of biological role, catalyzes the covalent attachment of ubiquitin to other proteins. Mediates the selective degradation of short-lived and abnormal proteins. Plays a role in the DNA damage response. In particular, in response to ionizing radiation, associates with the E3 ubiquitin-protein ligase brc-1-brd-1 heterodimer on chromatin to activate E3-ubiquitin ligase activity of the heterodimer, and thus its DNA damage repair mechanisms. Required, cell autonomously, for death of the linker cell, a male-specific cell which guides the elongation of the gonad; perhaps acting as part of the ubiquitin proteasome system (UPS) and modulated by heat shock transcription factor hsf-1. This chain is Ubiquitin-conjugating enzyme E2 2, found in Caenorhabditis elegans.